We begin with the raw amino-acid sequence, 334 residues long: Glycerol-3-phosphate dehydrogenase [NAD(P)+] (334 aa).

NADPH-binding residues include Trp13, Arg33, and Lys106. Sn-glycerol 3-phosphate is bound by residues Lys106, Gly137, and Ser139. Ala141 contacts NADPH. Residues Lys192, Asp245, Ser255, Arg256, and Asn257 each contribute to the sn-glycerol 3-phosphate site. Residue Lys192 is the Proton acceptor of the active site. Residue Arg256 participates in NADPH binding. Val280 and Glu282 together coordinate NADPH.

The protein belongs to the NAD-dependent glycerol-3-phosphate dehydrogenase family.

The protein localises to the cytoplasm. The catalysed reaction is sn-glycerol 3-phosphate + NAD(+) = dihydroxyacetone phosphate + NADH + H(+). The enzyme catalyses sn-glycerol 3-phosphate + NADP(+) = dihydroxyacetone phosphate + NADPH + H(+). The protein operates within membrane lipid metabolism; glycerophospholipid metabolism. Catalyzes the reduction of the glycolytic intermediate dihydroxyacetone phosphate (DHAP) to sn-glycerol 3-phosphate (G3P), the key precursor for phospholipid synthesis. The protein is Glycerol-3-phosphate dehydrogenase [NAD(P)+] of Chlamydia caviae (strain ATCC VR-813 / DSM 19441 / 03DC25 / GPIC) (Chlamydophila caviae).